Consider the following 264-residue polypeptide: COP9 signalosome complex subunit 7b (264 aa).

N-acetylalanine is present on A2. The 158-residue stretch at 2–159 folds into the PCI domain; the sequence is AGEQKPSSNL…QLLEVDFCIG (158 aa). Positions 194–237 form a coiled coil; that stretch reads RANQYKENHSRTQQQVEAEVTNIKKTLKATASSSAQEMEQQLAE. Polar residues predominate over residues 223-232; the sequence is TASSSAQEME. A disordered region spans residues 223-264; the sequence is TASSSAQEMEQQLAERECPPHAEQRQPTKKMSKVKGLVSSRH. The segment covering 235–248 has biased composition (basic and acidic residues); that stretch reads LAERECPPHAEQRQ.

This sequence belongs to the CSN7/EIF3M family. CSN7 subfamily. Component of the CSN complex, composed of COPS1/GPS1, COPS2, COPS3, COPS4, COPS5, COPS6, COPS7 (COPS7A or COPS7B), COPS8 and COPS9. In the complex, it probably interacts directly with COPS1, COPS2, COPS4, COPS5, COPS6 and COPS8. Interacts with EIF3S6.

It localises to the cytoplasm. The protein localises to the nucleus. Component of the COP9 signalosome complex (CSN), a complex involved in various cellular and developmental processes. The CSN complex is an essential regulator of the ubiquitin (Ubl) conjugation pathway by mediating the deneddylation of the cullin subunits of SCF-type E3 ligase complexes, leading to decrease the Ubl ligase activity of SCF-type complexes such as SCF, CSA or DDB2. The complex is also involved in phosphorylation of p53/TP53, JUN, I-kappa-B-alpha/NFKBIA, ITPK1 and IRF8/ICSBP, possibly via its association with CK2 and PKD kinases. CSN-dependent phosphorylation of TP53 and JUN promotes and protects degradation by the Ubl system, respectively. The chain is COP9 signalosome complex subunit 7b (COPS7B) from Bos taurus (Bovine).